The sequence spans 499 residues: Sialic acid-binding Ig-like lectin 8 (499 aa).

The N-terminal stretch at Met-1–Gly-16 is a signal peptide. Topologically, residues Met-17–Ala-363 are extracellular. Residues Tyr-23, Arg-72–Gln-75, Arg-125, and Ser-134–Gln-138 contribute to the a carbohydrate site. In terms of domain architecture, Ig-like V-type spans Gly-40–Phe-123. Disulfide bonds link Cys-42-Cys-181, Cys-47-Cys-107, and Cys-175-Cys-224. Ig-like C2-type domains follow at residues Pro-157–Arg-240 and Pro-246–Ser-344. Asn-172 is a glycosylation site (N-linked (GlcNAc...) asparagine). 2 N-linked (GlcNAc...) asparagine glycosylation sites follow: Asn-249 and Asn-267. Cys-283 and Cys-328 are oxidised to a cystine. Residues Val-364–Val-384 form a helical membrane-spanning segment. The Cytoplasmic segment spans residues Arg-385 to Gly-499. The interval Arg-410–Gly-443 is disordered. An ITIM motif motif is present at residues Leu-445–Leu-450. Disordered stretches follow at residues Ser-451 to Tyr-470 and Arg-478 to Gly-499. Positions Ser-468 to Ile-473 match the SLAM-like motif motif.

This sequence belongs to the immunoglobulin superfamily. SIGLEC (sialic acid binding Ig-like lectin) family. In terms of tissue distribution, expressed specifically on blood cells namely basophil, mast cells and eosinophils.

The protein localises to the membrane. In terms of biological role, putative adhesion molecule that mediates sialic-acid dependent binding to blood cells. Preferentially binds to alpha-2,3-linked sialic acid. Also binds to alpha-2,6-linked sialic acid. The sialic acid recognition site may be masked by cis interactions with sialic acids on the same cell surface. Recognizes simultaneously epitopes having a terminal N-acetylneuraminic acid (sialic acid) and an underlying 6-O-sulfated galactose. Preferentially binds to Gal-6-sulfated sialyl-Lewis X glycan epitopes. This Homo sapiens (Human) protein is Sialic acid-binding Ig-like lectin 8 (SIGLEC8).